The sequence spans 353 residues: (S)-8-amino-7-oxononanoate synthase BioU (353 aa).

10 to 14 (GTGGI) contacts NAD(+). The Nucleophile role is filled by lysine 147. At lysine 147 the chain carries Allysine. 214-215 (GT) serves as a coordination point for NAD(+). Glutamate 218 acts as the Proton acceptor in catalysis. The Proton donor and proton acceptor role is filled by histidine 222.

Belongs to the BioU family. As to quaternary structure, monomer.

It carries out the reaction (8S)-8-amino-7-oxononanoate + L-lysyl-[protein] + CO2 = (S)-2-amino-6-oxohexanoyl-[protein] + (7R,8S)-8-amino-7-(carboxyamino)nonanoate + 2 H(+). The enzyme catalyses (8S)-8-amino-7-oxononanoate + L-lysyl-[protein] + NADPH + H(+) = N(6)-[(2S,3R)-2-amino-8-carboxyoctan-3-yl]-L-lysyl-[protein] + NADP(+) + H2O. The catalysed reaction is N(6)-[(2S,3R)-2-amino-8-carboxyoctan-3-yl]-L-lysyl-[protein] + CO2 + NADP(+) + H2O = (S)-2-amino-6-oxohexanoyl-[protein] + (7R,8S)-8-amino-7-(carboxyamino)nonanoate + NADPH + 3 H(+). It catalyses the reaction (8S)-8-amino-7-oxononanoate + L-lysyl-[protein] + NADH + H(+) = N(6)-[(2S,3R)-2-amino-8-carboxyoctan-3-yl]-L-lysyl-[protein] + NAD(+) + H2O. It carries out the reaction N(6)-[(2S,3R)-2-amino-8-carboxyoctan-3-yl]-L-lysyl-[protein] + CO2 + NAD(+) + H2O = (S)-2-amino-6-oxohexanoyl-[protein] + (7R,8S)-8-amino-7-(carboxyamino)nonanoate + NADH + 3 H(+). The protein operates within cofactor biosynthesis; biotin biosynthesis. In terms of biological role, a 'suicide' enzyme that participates in biotin synthesis. Catalyzes the formation of (S)-8-amino-7-oxononanoate (DAN-carbamic acid) from (7R,8S)-8-amino-7-(carboxyamino)nonanoate (DAN), a function equivalent to the cannonical BioA reaction and the first half-reaction of BioD. The cellular requirement for biotin is thought be low enough that this single turnover enzyme supplies a sufficient amount of the cofactor. Overall it catalyzes three reactions: formation of a covalent linkage with 8-amino-7-oxononanoate to yield a BioU-DAN conjugate at the epsilon-amino group of Lys124 of BioU using NAD(P)H, carboxylation of the conjugate to form BioU-DAN-carbamic acid, and release of DAN-carbamic acid using NAD(P)+. Complements a bioA deletion in E.coli. In Haloferax mediterranei (strain ATCC 33500 / DSM 1411 / JCM 8866 / NBRC 14739 / NCIMB 2177 / R-4) (Halobacterium mediterranei), this protein is (S)-8-amino-7-oxononanoate synthase BioU.